A 143-amino-acid polypeptide reads, in one-letter code: Large ribosomal subunit protein uL15 (143 aa).

Positions 1–52 (MKLNTLAPAAGSKSAPKRLGRGIGSGLGKTSGKGHKGQKARSGGYHKVGFEG) are disordered. Positions 21–31 (RGIGSGLGKTS) are enriched in gly residues.

It belongs to the universal ribosomal protein uL15 family. As to quaternary structure, part of the 50S ribosomal subunit.

Functionally, binds to the 23S rRNA. The chain is Large ribosomal subunit protein uL15 from Francisella tularensis subsp. novicida (strain U112).